Reading from the N-terminus, the 112-residue chain is uncharacterized protein (112 aa).

A run of 2 helical transmembrane segments spans residues P7–Y26 and T36–Y58.

It is found in the membrane. This is an uncharacterized protein from Saccharomyces cerevisiae (strain ATCC 204508 / S288c) (Baker's yeast).